The chain runs to 116 residues: Protein Rev (116 aa).

A phosphoserine; by host CK2 mark is found at Ser-5 and Ser-8. The tract at residues Ile-18–Asn-26 is homomultimerization. The segment at Gln-24–Gln-49 is disordered. A Nuclear localization signal and RNA-binding (RRE) motif is present at residues Thr-34 to Arg-50. The span at Gln-36–Glu-47 shows a compositional bias: basic residues. Residues Leu-73–Asp-84 carry the Nuclear export signal and binding to XPO1 motif. Ser-92 and Ser-99 each carry phosphoserine; by host.

The protein belongs to the HIV-1 REV protein family. Homomultimer; when bound to the RRE. Multimeric assembly is essential for activity and may involve XPO1. Binds to human KPNB1, XPO1, TNPO1, RANBP5 and IPO7. Interacts with the viral Integrase. Interacts with human KHDRBS1. Interacts with human NAP1; this interaction decreases Rev multimerization and stimulates its activity. Interacts with human DEAD-box helicases DDX3 and DDX24; these interactions may serve for viral RNA export to the cytoplasm and packaging, respectively. Interacts with human PSIP1; this interaction may inhibit HIV-1 DNA integration by promoting dissociation of the Integrase-LEDGF/p75 complex. In terms of processing, asymmetrically arginine dimethylated at one site by host PRMT6. Methylation impairs the RNA-binding activity and export of viral RNA from the nucleus to the cytoplasm. Post-translationally, phosphorylated by protein kinase CK2. Presence of, and maybe binding to the N-terminus of the regulatory beta subunit of CK2 is necessary for CK2-mediated Rev's phosphorylation.

Its subcellular location is the host nucleus. It is found in the host nucleolus. The protein localises to the host cytoplasm. Functionally, escorts unspliced or incompletely spliced viral pre-mRNAs (late transcripts) out of the nucleus of infected cells. These pre-mRNAs carry a recognition sequence called Rev responsive element (RRE) located in the env gene, that is not present in fully spliced viral mRNAs (early transcripts). This function is essential since most viral proteins are translated from unspliced or partially spliced pre-mRNAs which cannot exit the nucleus by the pathway used by fully processed cellular mRNAs. Rev itself is translated from a fully spliced mRNA that readily exits the nucleus. Rev's nuclear localization signal (NLS) binds directly to KPNB1/Importin beta-1 without previous binding to KPNA1/Importin alpha-1. KPNB1 binds to the GDP bound form of RAN (Ran-GDP) and targets Rev to the nucleus. In the nucleus, the conversion from Ran-GDP to Ran-GTP dissociates Rev from KPNB1 and allows Rev's binding to the RRE in viral pre-mRNAs. Rev multimerization on the RRE via cooperative assembly exposes its nuclear export signal (NES) to the surface. Rev can then form a complex with XPO1/CRM1 and Ran-GTP, leading to nuclear export of the complex. Conversion from Ran-GTP to Ran-GDP mediates dissociation of the Rev/RRE/XPO1/RAN complex, so that Rev can return to the nucleus for a subsequent round of export. Beside KPNB1, also seems to interact with TNPO1/Transportin-1, RANBP5/IPO5 and IPO7/RANBP7 for nuclear import. The nucleoporin-like HRB/RIP is an essential cofactor that probably indirectly interacts with Rev to release HIV RNAs from the perinuclear region to the cytoplasm. The protein is Protein Rev of Human immunodeficiency virus type 1 group M subtype B (isolate SF33) (HIV-1).